The primary structure comprises 183 residues: Transmembrane protein 252 (183 aa).

The next 2 membrane-spanning stretches (helical) occupy residues 8 to 28 (ILCA…GFFI) and 39 to 59 (LVVA…GIFW).

It is found in the membrane. This Mus musculus (Mouse) protein is Transmembrane protein 252 (Tmem252).